Consider the following 397-residue polypeptide: 1-deoxy-D-xylulose 5-phosphate reductoisomerase (397 aa).

NADPH-binding residues include T10, G11, S12, I13, N39, and N125. K126 contributes to the 1-deoxy-D-xylulose 5-phosphate binding site. NADPH is bound at residue E127. Position 151 (D151) interacts with Mn(2+). S152, E153, S187, and H210 together coordinate 1-deoxy-D-xylulose 5-phosphate. Position 153 (E153) interacts with Mn(2+). An NADPH-binding site is contributed by G216. S223, N228, K229, and E232 together coordinate 1-deoxy-D-xylulose 5-phosphate. E232 contributes to the Mn(2+) binding site.

It belongs to the DXR family. Homodimer. Mg(2+) is required as a cofactor. It depends on Mn(2+) as a cofactor.

The enzyme catalyses 2-C-methyl-D-erythritol 4-phosphate + NADP(+) = 1-deoxy-D-xylulose 5-phosphate + NADPH + H(+). It participates in isoprenoid biosynthesis; isopentenyl diphosphate biosynthesis via DXP pathway; isopentenyl diphosphate from 1-deoxy-D-xylulose 5-phosphate: step 1/6. Catalyzes the NADPH-dependent rearrangement and reduction of 1-deoxy-D-xylulose-5-phosphate (DXP) to 2-C-methyl-D-erythritol 4-phosphate (MEP). This Wigglesworthia glossinidia brevipalpis protein is 1-deoxy-D-xylulose 5-phosphate reductoisomerase.